The chain runs to 65 residues: Large ribosomal subunit protein bL32 (65 aa).

Over residues 1 to 19 (MAIVPKRKTSKQRKHKRQS) the composition is skewed to basic residues. The tract at residues 1-21 (MAIVPKRKTSKQRKHKRQSHS) is disordered.

This sequence belongs to the bacterial ribosomal protein bL32 family.

This is Large ribosomal subunit protein bL32 from Mesomycoplasma hyopneumoniae (strain 7448) (Mycoplasma hyopneumoniae).